Reading from the N-terminus, the 311-residue chain is Ribosomal RNA small subunit methyltransferase A (311 aa).

Residues N29, V31, G56, E77, D107, and N126 each contribute to the S-adenosyl-L-methionine site.

This sequence belongs to the class I-like SAM-binding methyltransferase superfamily. rRNA adenine N(6)-methyltransferase family. RsmA subfamily.

It is found in the cytoplasm. The catalysed reaction is adenosine(1518)/adenosine(1519) in 16S rRNA + 4 S-adenosyl-L-methionine = N(6)-dimethyladenosine(1518)/N(6)-dimethyladenosine(1519) in 16S rRNA + 4 S-adenosyl-L-homocysteine + 4 H(+). Functionally, specifically dimethylates two adjacent adenosines (A1518 and A1519) in the loop of a conserved hairpin near the 3'-end of 16S rRNA in the 30S particle. May play a critical role in biogenesis of 30S subunits. This chain is Ribosomal RNA small subunit methyltransferase A, found in Mycolicibacterium vanbaalenii (strain DSM 7251 / JCM 13017 / BCRC 16820 / KCTC 9966 / NRRL B-24157 / PYR-1) (Mycobacterium vanbaalenii).